A 232-amino-acid chain; its full sequence is Ribonuclease 3 (232 aa).

One can recognise an RNase III domain in the interval 5 to 134 (QTVLKNHFAI…FLGALLLDKD (130 aa)). E47 contributes to the Mg(2+) binding site. D51 is a catalytic residue. D120 and E123 together coordinate Mg(2+). The active site involves E123. Residues 160–229 (DYKTHLQELL…AKNAVEKGLD (70 aa)) form the DRBM domain.

The protein belongs to the ribonuclease III family. Homodimer. Requires Mg(2+) as cofactor.

It is found in the cytoplasm. It carries out the reaction Endonucleolytic cleavage to 5'-phosphomonoester.. In terms of biological role, digests double-stranded RNA. Involved in the processing of primary rRNA transcript to yield the immediate precursors to the large and small rRNAs (23S and 16S). Processes some mRNAs, and tRNAs when they are encoded in the rRNA operon. Processes pre-crRNA and tracrRNA of type II CRISPR loci if present in the organism. This Streptococcus pneumoniae serotype 4 (strain ATCC BAA-334 / TIGR4) protein is Ribonuclease 3.